Here is a 531-residue protein sequence, read N- to C-terminus: GPI alpha-1,2-mannosyltransferase 3 (531 aa).

Residue Asn84 is glycosylated (N-linked (GlcNAc...) asparagine). A run of 3 helical transmembrane segments spans residues 99–119 (GLRGFSYPLMFAAIYKVLYLL), 124–144 (VWFLIWIPRLAQAVLSGIADV), and 174–196 (YCATRTLTNTMEAVLSTFALYYY). A glycan (N-linked (GlcNAc...) asparagine) is linked at Asn204. Helical transmembrane passes span 210-230 (LICVALAFLIRPTAVILWIPL), 249-269 (YLPIGILTLAASLTVDRIFFG), 303-323 (GVPVILCTHLPFFIHGCMVTP), 328-348 (ILLVAVAWTVLTYSALSHKEF), 350-370 (FIYPVLPVCMVFCGFSFSNLK), and 375-395 (AAVGFLVLSNLFPALYTGLIH). Residues Asn414 and Asn476 are each glycosylated (N-linked (GlcNAc...) asparagine).

Belongs to the glycosyltransferase 22 family. PIGB subfamily.

The protein resides in the endoplasmic reticulum membrane. The protein operates within glycolipid biosynthesis; glycosylphosphatidylinositol-anchor biosynthesis. Functionally, alpha-1,2-mannosyltransferase that catalyzes the transfer of the third mannose, via an alpha-1,2 bond, from a dolichol-phosphate-mannose (Dol-P-Man) to an alpha-D-Man-(1-&gt;6)-2-PEtn-alpha-D-Man-(1-&gt;4)-alpha-D-GlcN-(1-&gt;6)-(1-radyl,2-acyl-sn-glycero-3-phospho)-2-acyl-inositol intermediate to generate an alpha-D-Man-(1-&gt;2)-alpha-D-Man-(1-&gt;6)-2-PEtn-alpha-D-Man-(1-&gt;4)-alpha-D-GlcN-(1-&gt;6)-(1-radyl,2-acyl-sn-glycero-3-phospho)-2-acyl-inositol (also termed H6) and participates in the nineth step of the glycosylphosphatidylinositol-anchor biosynthesis. May also add the third mannose to an alpha-D-Man-(1-&gt;6)-alpha-D-Man-(1-&gt;4)-alpha-D-GlcN-(1-&gt;6)-(1-radyl,2-acyl-sn-glycero-3-phospho)-2-acyl-inositol (also termed H3) intermediate generating an alpha-D-Man-(1-&gt;2)-alpha-D-Man-(1-&gt;6)-alpha-D-Man-(1-&gt;4)-alpha-D-GlcN-(1-&gt;6)-(1-radyl,2-acyl-sn-glycero-3-phospho)-2-acyl-inositol (also termed H4). The sequence is that of GPI alpha-1,2-mannosyltransferase 3 from Xenopus laevis (African clawed frog).